The primary structure comprises 107 residues: Ribonuclease P protein component 4 (107 aa).

Residues cysteine 66, cysteine 69, cysteine 92, and cysteine 95 each coordinate Zn(2+).

This sequence belongs to the eukaryotic/archaeal RNase P protein component 4 family. Consists of a catalytic RNA component and at least 4-5 protein subunits. Zn(2+) serves as cofactor.

The protein localises to the cytoplasm. The catalysed reaction is Endonucleolytic cleavage of RNA, removing 5'-extranucleotides from tRNA precursor.. Its function is as follows. Part of ribonuclease P, a protein complex that generates mature tRNA molecules by cleaving their 5'-ends. This Methanosarcina acetivorans (strain ATCC 35395 / DSM 2834 / JCM 12185 / C2A) protein is Ribonuclease P protein component 4.